The primary structure comprises 224 residues: Large ribosomal subunit protein bL25 (224 aa).

Belongs to the bacterial ribosomal protein bL25 family. CTC subfamily. Part of the 50S ribosomal subunit; part of the 5S rRNA/L5/L18/L25 subcomplex. Contacts the 5S rRNA. Binds to the 5S rRNA independently of L5 and L18.

In terms of biological role, this is one of the proteins that binds to the 5S RNA in the ribosome where it forms part of the central protuberance. The chain is Large ribosomal subunit protein bL25 from Psychrobacter arcticus (strain DSM 17307 / VKM B-2377 / 273-4).